The primary structure comprises 70 residues: uncharacterized protein (70 aa).

Positions 40–70 are disordered; it reads LHQQRTAHKVTSPPSQRPQNSETKSDSQNRS. The span at 51-61 shows a compositional bias: polar residues; the sequence is SPPSQRPQNSE.

This is an uncharacterized protein from Bdellovibrio phage phiMH2K (Bacteriophage phiMH2K).